The following is a 292-amino-acid chain: MSMACTKVWRSTMYTPRRLKRTTPASRVSSTAMAAANGDASHGANGGIQIQSKEMKTAIHSNDSPKTLLKSESLHEYMLNTMVYPRENEFMRELRLITSEHTYGFMSSPPEEGQLLSLLLNLTGAKNTIEVGVFTGCSVLATALAIPDDGKVVAIDVSREYFDLGLPVIKKAGVAHKVDFREGAAMPILDNLLANEENEGKFDFAFVDADKGNYGEYHERLLRLVRAGGVLAYDNTLWGGSVALEDDSVLEEFDQDIRRSIVAFNAKIAGDPRVEAVQLPVSDGITLCRRLV.

Positions 21–46 are disordered; it reads RTTPASRVSSTAMAAANGDASHGANG. A compositionally biased stretch (polar residues) spans 23 to 32; sequence TPASRVSSTA. Residues Ser108, Glu130, 132–133, Ser138, Asp156, and Ala185 contribute to the S-adenosyl-L-methionine site; that span reads GV. Position 208 (Asp208) interacts with a divalent metal cation. Asp210 is an S-adenosyl-L-methionine binding site. Positions 234 and 235 each coordinate a divalent metal cation.

This sequence belongs to the class I-like SAM-binding methyltransferase superfamily. Cation-dependent O-methyltransferase family. CCoAMT subfamily. Mg(2+) serves as cofactor. The cofactor is Mn(2+). Expressed in stems only.

It catalyses the reaction tricetin + 2 S-adenosyl-L-methionine = 3',5'-di-O-methyltricetin + 2 S-adenosyl-L-homocysteine + 2 H(+). Its function is as follows. Catalyzes the stepwise methylation of tricetin to its 3'-mono- and 3',5'-dimethyl ethers. No 3',4',5'-trimethylated ester derivatives are produced. Can use caffeoyl CoA, 5-hydroxyferulic acid, luteolin, tricetin, quercetin, myrcetin and 7,8-dihydroxyflavone as substrates, but not naringenin, apigenin or kaempferol. The 2,3-double bond and the O-dihydroxyl group of the substrate are both required for catalytic activity of the enzyme. The polypeptide is Tricin synthase 2 (ROMT-17) (Oryza sativa subsp. japonica (Rice)).